A 714-amino-acid chain; its full sequence is Glycine--tRNA ligase beta subunit (714 aa).

Belongs to the class-II aminoacyl-tRNA synthetase family. Tetramer of two alpha and two beta subunits.

The protein resides in the cytoplasm. The catalysed reaction is tRNA(Gly) + glycine + ATP = glycyl-tRNA(Gly) + AMP + diphosphate. This chain is Glycine--tRNA ligase beta subunit, found in Rhodospirillum centenum (strain ATCC 51521 / SW).